A 338-amino-acid polypeptide reads, in one-letter code: MNNSADITVLGAGSYGTALAISLASNGHKTLLWGHDPAHMQTLAEDKCNQAFLPGIAFPECLHIEADLAKALAASNNVLVVVPSHVFGTVLAQAKPLLRQDARIVWATKGLEPETGRLLQDVARDVLGEQYPLAVLSGPTFAKELAMGLPTAISVAGTCPQFTAELVELLHSPKRLRVYANDDFIGLQLGGAVKNVIAIGAGMSDGIGFGANARTALITRGLVELTRLGEALGASTATFMGMAGLGDLVLTCTDNQSRNRRFGLALGKGCDVDTAQVEIGQVVEGYRNTKEVFTLAKRLGVEMPITEQIYQVLYQGKSPVDAAKELLGREKKSETPTQ.

NADPH is bound by residues serine 14, tyrosine 15, histidine 35, and lysine 109. Residues lysine 109, glycine 138, and threonine 140 each contribute to the sn-glycerol 3-phosphate site. Alanine 142 contributes to the NADPH binding site. Lysine 194, aspartate 247, serine 257, arginine 258, and asparagine 259 together coordinate sn-glycerol 3-phosphate. The active-site Proton acceptor is the lysine 194. NADPH is bound at residue arginine 258. NADPH contacts are provided by valine 282 and glutamate 284.

The protein belongs to the NAD-dependent glycerol-3-phosphate dehydrogenase family.

It localises to the cytoplasm. The enzyme catalyses sn-glycerol 3-phosphate + NAD(+) = dihydroxyacetone phosphate + NADH + H(+). It catalyses the reaction sn-glycerol 3-phosphate + NADP(+) = dihydroxyacetone phosphate + NADPH + H(+). Its pathway is membrane lipid metabolism; glycerophospholipid metabolism. Its function is as follows. Catalyzes the reduction of the glycolytic intermediate dihydroxyacetone phosphate (DHAP) to sn-glycerol 3-phosphate (G3P), the key precursor for phospholipid synthesis. This chain is Glycerol-3-phosphate dehydrogenase [NAD(P)+], found in Shewanella oneidensis (strain ATCC 700550 / JCM 31522 / CIP 106686 / LMG 19005 / NCIMB 14063 / MR-1).